The primary structure comprises 589 residues: Zinc finger protein 131 (589 aa).

One can recognise a BTB domain in the interval 34–98 (TDITLIVDGH…TYTAKLMIQG (65 aa)). The Nuclear localization signal 1 signature appears at 137–148 (TGKNEAKKRKIA). The span at 224–234 (GDRKGQIKEDG) shows a compositional bias: basic and acidic residues. The disordered stretch occupies residues 224–247 (GDRKGQIKEDGCPSDPTSKQEHMK). 2 C2H2-type zinc fingers span residues 254–277 (FKCEICNKRYLRESAWKQHLNCYH) and 294–316 (HVCQYCEKQFDHFGHFKEHLRKH). Glycyl lysine isopeptide (Lys-Gly) (interchain with G-Cter in SUMO2) cross-links involve residues K255 and K261. A Nuclear localization signal 2 motif is present at residues 283–294 (VSKKQRTGKKIH). A C2H2-type 3; degenerate zinc finger spans residues 322–347 (FECPNCHERFARNSTLKCHLTACQTG). 2 consecutive C2H2-type zinc fingers follow at residues 358 to 380 (YECQVCNSVFNSWDQFKDHLVIH) and 386 to 409 (NHCTLCDLWFMQGNELRRHLSDAH). Over residues 539–583 (NQEERESSQADAAEAAREDHEDAEDLETKPTVDSEAEKAENEDRT) the composition is skewed to basic and acidic residues. The disordered stretch occupies residues 539-589 (NQEERESSQADAAEAAREDHEDAEDLETKPTVDSEAEKAENEDRTAMPVLE). A Glycyl lysine isopeptide (Lys-Gly) (interchain with G-Cter in SUMO) cross-link involves residue K567.

It belongs to the krueppel C2H2-type zinc-finger protein family. In terms of processing, monosumoylated at Lys-567 by CBX4 and UHRF2. Sumoylation may potentiate ZNF131 inhibition of estrogen signaling. Sumoylation does not interfere with ubiquitination. Ubiquitinated.

It is found in the nucleus. In terms of biological role, may be involved in transcriptional regulation as a repressor of ESR1/ER-alpha signaling. Plays a role during development and organogenesis as well as in the function of the adult central nervous system. The polypeptide is Zinc finger protein 131 (ZNF131) (Pongo abelii (Sumatran orangutan)).